The following is a 214-amino-acid chain: Killer cell lectin-like receptor subfamily B member 1 (214 aa).

The Cytoplasmic portion of the chain corresponds to 1-42 (MDAPVLYAELHLANTQGLRCTSPPSPRQDACWGSGWHRVALK). A helical; Signal-anchor for type II membrane protein membrane pass occupies residues 43-63 (LGCVGLILLLMGLSVLVGFLV). At 64 to 214 (QKPPIEKCSV…WICQKTLKRV (151 aa)) the chain is on the extracellular side. One can recognise a C-type lectin domain in the interval 98–208 (HWNKCLFISQ…CSSDNHWICQ (111 aa)). 2 disulfides stabilise this stretch: C119-C207 and C186-C199.

The protein resides in the membrane. The polypeptide is Killer cell lectin-like receptor subfamily B member 1 (Klrb1) (Rattus norvegicus (Rat)).